Consider the following 277-residue polypeptide: Urease accessory protein UreD (277 aa).

This sequence belongs to the UreD family. In terms of assembly, ureD, UreF and UreG form a complex that acts as a GTP-hydrolysis-dependent molecular chaperone, activating the urease apoprotein by helping to assemble the nickel containing metallocenter of UreC. The UreE protein probably delivers the nickel.

The protein localises to the cytoplasm. Required for maturation of urease via the functional incorporation of the urease nickel metallocenter. The sequence is that of Urease accessory protein UreD from Pseudomonas putida (strain ATCC 47054 / DSM 6125 / CFBP 8728 / NCIMB 11950 / KT2440).